A 387-amino-acid chain; its full sequence is ATP phosphoribosyltransferase regulatory subunit (387 aa).

Belongs to the class-II aminoacyl-tRNA synthetase family. HisZ subfamily. In terms of assembly, heteromultimer composed of HisG and HisZ subunits.

It is found in the cytoplasm. The protein operates within amino-acid biosynthesis; L-histidine biosynthesis; L-histidine from 5-phospho-alpha-D-ribose 1-diphosphate: step 1/9. Required for the first step of histidine biosynthesis. May allow the feedback regulation of ATP phosphoribosyltransferase activity by histidine. This is ATP phosphoribosyltransferase regulatory subunit from Methylobacillus flagellatus (strain ATCC 51484 / DSM 6875 / VKM B-1610 / KT).